The sequence spans 231 residues: MGQKINPIGLRLGINRTWDSRWYAGKAEYGRLLHEDVKIRELLHKELKQAAVARIVIERPHKKCRVTIHSARPGVVIGKKGADIDKLRKRVADITSSDVVLNIVEIRKPELDATLVAESIAQQLERRVAFRRAMKRAVQSAMRLGAEGIRINCSGRLGGAEIARMEWYREGRVPLHTLRADVDYGVATAFTTFGTCGVKVWIFKGEILEHDPMAQDKRQAGDDSRPRRDAA.

Positions 39–107 (IRELLHKELK…DVVLNIVEIR (69 aa)) constitute a KH type-2 domain.

It belongs to the universal ribosomal protein uS3 family. Part of the 30S ribosomal subunit. Forms a tight complex with proteins S10 and S14.

Functionally, binds the lower part of the 30S subunit head. Binds mRNA in the 70S ribosome, positioning it for translation. This chain is Small ribosomal subunit protein uS3, found in Nitrobacter winogradskyi (strain ATCC 25391 / DSM 10237 / CIP 104748 / NCIMB 11846 / Nb-255).